A 618-amino-acid chain; its full sequence is COMPASS component cclA (618 aa).

Positions 1 to 91 (MSSIQPVGSS…KKAAVAPNSA (91 aa)) are disordered. Composition is skewed to low complexity over residues 8 to 19 (GSSGPSSNINSP) and 37 to 49 (NARS…SNAS). Over residues 57-69 (SKRNKRDSRKKRE) the composition is skewed to basic residues. The region spanning 157 to 368 (IADPGFPHIK…QSNVFSTKHL (212 aa)) is the B30.2/SPRY domain. Residues 588-618 (TLSVGHEGSPNPATPSAPLENTVPTEDVEMS) form a disordered region.

The protein belongs to the cclA family. In terms of assembly, component of the COMPASS complex.

It localises to the nucleus. It is found in the chromosome. The protein localises to the telomere. Component of the COMPASS (Set1C) complex that specifically mono-, di- and trimethylates histone H3 to form H3K4me1/2/3, which subsequently plays a role in telomere length maintenance and transcription elongation regulation. Controls the production of several secondary metabolites, including gliotoxin, but does not contribute to pathogenicity. The protein is COMPASS component cclA of Aspergillus fumigatus (strain ATCC MYA-4609 / CBS 101355 / FGSC A1100 / Af293) (Neosartorya fumigata).